Reading from the N-terminus, the 91-residue chain is Acylphosphatase (91 aa).

The Acylphosphatase-like domain maps to 5 to 91 (RAHLRIYGRV…EGLEGFKVVG (87 aa)). Catalysis depends on residues R20 and N38.

Belongs to the acylphosphatase family.

The enzyme catalyses an acyl phosphate + H2O = a carboxylate + phosphate + H(+). The chain is Acylphosphatase (acyP) from Thermococcus kodakarensis (strain ATCC BAA-918 / JCM 12380 / KOD1) (Pyrococcus kodakaraensis (strain KOD1)).